A 201-amino-acid polypeptide reads, in one-letter code: Small ribosomal subunit protein uS4c (201 aa).

Residues 89–150 enclose the S4 RNA-binding domain; sequence MRLDNILFRL…KQRSKVLIQN (62 aa).

The protein belongs to the universal ribosomal protein uS4 family. In terms of assembly, part of the 30S ribosomal subunit. Contacts protein S5. The interaction surface between S4 and S5 is involved in control of translational fidelity.

Its subcellular location is the plastid. The protein resides in the chloroplast. In terms of biological role, one of the primary rRNA binding proteins, it binds directly to 16S rRNA where it nucleates assembly of the body of the 30S subunit. Its function is as follows. With S5 and S12 plays an important role in translational accuracy. The chain is Small ribosomal subunit protein uS4c (rps4) from Acorus calamus (Sweet flag).